The chain runs to 694 residues: ATP-binding cassette sub-family G member 8 (694 aa).

Residues 1 to 437 are Cytoplasmic-facing; sequence MAEKTKEETQ…ISNDFRDLPT (437 aa). In terms of domain architecture, ABC transporter spans 91 to 335; the sequence is AQFKLPWRSR…FTSIGYPCPR (245 aa). An ABC transmembrane type-2 domain is found at 436–684; sequence PTLFIHGAEA…FLSLYYLSLK (249 aa). A helical transmembrane segment spans residues 438–458; that stretch reads LFIHGAEACLMSLIIGFLYYG. The Extracellular portion of the chain corresponds to 459–468; that stretch reads HADKPLSFMD. Residues 469–489 form a helical membrane-spanning segment; the sequence is MAALLFMIGALIPFNVILDVV. Topologically, residues 490–518 are cytoplasmic; the sequence is SKCHSERSLLYYELEDGLYTAGPYFFAKV. A helical membrane pass occupies residues 519-539; that stretch reads LGELPEHCAYVIIYGMPIYWL. The Extracellular segment spans residues 540–548; sequence TNLRPGPEL. The chain crosses the membrane as a helical span at residues 549–569; it reads FLLHFMLLWLVVFCCRTMALA. The Cytoplasmic portion of the chain corresponds to 570–576; the sequence is ASAMLPT. A helical transmembrane segment spans residues 577-597; the sequence is FHMSSFCCNALYNSFYLTAGF. Residues 598 to 660 lie on the Extracellular side of the membrane; the sequence is MINLNNLWIV…VTAMDLNSHP (63 aa). An N-linked (GlcNAc...) asparagine glycan is attached at N640. The chain crosses the membrane as a helical span at residues 661-681; sequence LYAIYLIVIGISCGFLSLYYL. The Cytoplasmic segment spans residues 682–694; sequence SLKFIKQKSIQDW.

This sequence belongs to the ABC transporter superfamily. ABCG family. Eye pigment precursor importer (TC 3.A.1.204) subfamily. Heterodimer with ABCG8. Mg(2+) is required as a cofactor. In terms of processing, N-glycosylated. N-glycosylation is important for efficient export out of the endoplasmic reticulum. In terms of tissue distribution, highest expression in liver, with lower levels in small intestine and colon.

It localises to the cell membrane. Its subcellular location is the apical cell membrane. It catalyses the reaction cholesterol(in) + ATP + H2O = cholesterol(out) + ADP + phosphate + H(+). The catalysed reaction is sitosterol(in) + ATP + H2O = sitosterol(out) + ADP + phosphate + H(+). ABCG5 and ABCG8 form an obligate heterodimer that mediates Mg(2+)- and ATP-dependent sterol transport across the cell membrane. Plays an essential role in the selective transport of the dietary cholesterol in and out of the enterocytes and in the selective sterol excretion by the liver into bile. Required for normal sterol homeostasis. The heterodimer with ABCG5 has ATPase activity. The polypeptide is ATP-binding cassette sub-family G member 8 (Rattus norvegicus (Rat)).